A 178-amino-acid polypeptide reads, in one-letter code: Large ribosomal subunit protein bL19 (178 aa).

It belongs to the bacterial ribosomal protein bL19 family.

This protein is located at the 30S-50S ribosomal subunit interface and may play a role in the structure and function of the aminoacyl-tRNA binding site. This chain is Large ribosomal subunit protein bL19, found in Rhizobium etli (strain ATCC 51251 / DSM 11541 / JCM 21823 / NBRC 15573 / CFN 42).